An 88-amino-acid polypeptide reads, in one-letter code: UPF0335 protein Mnod_5968 (88 aa).

The protein belongs to the UPF0335 family.

This chain is UPF0335 protein Mnod_5968, found in Methylobacterium nodulans (strain LMG 21967 / CNCM I-2342 / ORS 2060).